The sequence spans 341 residues: Ribulose-5-phosphate reductase (341 aa).

Residues C38, H64, E65, and E144 each contribute to the Zn(2+) site.

It belongs to the zinc-containing alcohol dehydrogenase family. It depends on Zn(2+) as a cofactor.

It carries out the reaction D-ribitol 5-phosphate + NADP(+) = D-ribulose 5-phosphate + NADPH + H(+). It participates in cell wall biogenesis; poly(ribitol phosphate) teichoic acid biosynthesis. In terms of biological role, catalyzes the NADPH dependent reduction of D-ribulose 5-phosphate to D-ribitol 5-phosphate. The sequence is that of Ribulose-5-phosphate reductase from Bacillus spizizenii (strain ATCC 23059 / NRRL B-14472 / W23) (Bacillus subtilis subsp. spizizenii).